The following is a 254-amino-acid chain: Attacin-A (254 aa).

An N-terminal signal peptide occupies residues methionine 1–alanine 18. Positions arginine 19–arginine 62 are excised as a propeptide.

Belongs to the attacin/sarcotoxin-2 family.

It is found in the secreted. Hemolymph antibacterial protein. The chain is Attacin-A from Trichoplusia ni (Cabbage looper).